The following is a 55-amino-acid chain: Large ribosomal subunit protein bL33 (55 aa).

Belongs to the bacterial ribosomal protein bL33 family.

This Erythrobacter litoralis (strain HTCC2594) protein is Large ribosomal subunit protein bL33.